A 780-amino-acid chain; its full sequence is Protein SEY1 (780 aa).

Topologically, residues 1 to 680 (MDSKEEAIQL…KRSMIKTTTH (680 aa)) are cytoplasmic. One can recognise a GB1/RHD3-type G domain in the interval 35–265 (GVNYHVISVF…NEDYYFKPEY (231 aa)). Residue 45–52 (GSQSSGKS) participates in GTP binding. Positions 440 to 463 (EVKEEVVKRFENDLKETSDKLRVT) form a coiled coil. The helical transmembrane segment at 681-701 (IPLWIYAIIVVLGWNEFMMVI) threads the bilayer. Residues 702–704 (RNP) lie on the Lumenal side of the membrane. The helical transmembrane segment at 705 to 725 (LFVTLTILILVSFYFINKFDL) threads the bilayer. Over 726–780 (WGPVKSVAQTAAGETIGTIKTKLRDFVLEEHEKTPKIQSEKSNSDSEKVVENEKS) the chain is Cytoplasmic. The disordered stretch occupies residues 756 to 780 (HEKTPKIQSEKSNSDSEKVVENEKS).

This sequence belongs to the TRAFAC class dynamin-like GTPase superfamily. GB1/RHD3 GTPase family. RHD3 subfamily.

It is found in the endoplasmic reticulum membrane. Cooperates with the reticulon proteins and tubule-shaping DP1 family proteins to generate and maintain the structure of the tubular endoplasmic reticulum network. Has GTPase activity, which is required for its function in ER organization. The protein is Protein SEY1 of Vanderwaltozyma polyspora (strain ATCC 22028 / DSM 70294 / BCRC 21397 / CBS 2163 / NBRC 10782 / NRRL Y-8283 / UCD 57-17) (Kluyveromyces polysporus).